We begin with the raw amino-acid sequence, 389 residues long: Acetate kinase (389 aa).

N9 lines the Mg(2+) pocket. An ATP-binding site is contributed by K16. Position 77 (R77) interacts with substrate. The active-site Proton donor/acceptor is D134. Residues 194–198 (HLGNG), 268–270 (DFR), and 316–320 (GVGEN) each bind ATP. E370 contacts Mg(2+).

Belongs to the acetokinase family. Homodimer. Requires Mg(2+) as cofactor. It depends on Mn(2+) as a cofactor.

The protein localises to the cytoplasm. The enzyme catalyses acetate + ATP = acetyl phosphate + ADP. The protein operates within metabolic intermediate biosynthesis; acetyl-CoA biosynthesis; acetyl-CoA from acetate: step 1/2. Catalyzes the formation of acetyl phosphate from acetate and ATP. Can also catalyze the reverse reaction. This chain is Acetate kinase, found in Mycolicibacterium vanbaalenii (strain DSM 7251 / JCM 13017 / BCRC 16820 / KCTC 9966 / NRRL B-24157 / PYR-1) (Mycobacterium vanbaalenii).